We begin with the raw amino-acid sequence, 477 residues long: Sensor protein kinase PmrB (477 aa).

The next 2 membrane-spanning stretches (helical) occupy residues 13-33 and 161-181; these read LLVNLLVGFVLCWLSVAALTY and LLLFYSLFPLLLALPLLGGLV. Positions 186 to 238 constitute an HAMP domain; that stretch reads ARGLAPLREVQAEVQQRSARHLQPIAVEAVPLEIRGLIDELNLLLERLRTALE. A Histidine kinase domain is found at 246-459; it reads DAAHEIRTPL…EVQVFLPKTQ (214 aa). H249 carries the phosphohistidine; by autocatalysis modification. The disordered stretch occupies residues 455–477; that stretch reads LPKTQPDATRPPARGPDSGRSHI.

Its subcellular location is the membrane. The catalysed reaction is ATP + protein L-histidine = ADP + protein N-phospho-L-histidine.. Functionally, member of the two-component regulatory system PmrA/PmrB that plays a role in the regulation of resistance towards polymyxin B and cationic antimicrobial peptides in response to limiting concentrations of Mg(2+). Also autoregulates its own pmrAB operon under Mg(2+)-limiting conditions. May function as a membrane-associated protein kinase that phosphorylates PmrA in response to environmental signals leading to activation of specific gene promoters. This Pseudomonas aeruginosa (strain ATCC 15692 / DSM 22644 / CIP 104116 / JCM 14847 / LMG 12228 / 1C / PRS 101 / PAO1) protein is Sensor protein kinase PmrB (pmrB).